A 503-amino-acid chain; its full sequence is 2-phosphoxylose phosphatase 1 (503 aa).

The Cytoplasmic segment spans residues methionine 1–arginine 6. Residues phenylalanine 7–leucine 27 traverse the membrane as a helical; Signal-anchor for type II membrane protein segment. Residues histidine 28–leucine 503 lie on the Lumenal side of the membrane. The segment at glutamine 38–arginine 63 is disordered. Asparagine 73 carries N-linked (GlcNAc...) asparagine glycosylation. Histidine 98 (nucleophile) is an active-site residue. N-linked (GlcNAc...) asparagine glycosylation is present at asparagine 365. Aspartate 396 (proton donor) is an active-site residue. A glycan (N-linked (GlcNAc...) asparagine) is linked at asparagine 490.

The protein belongs to the histidine acid phosphatase family.

The protein localises to the golgi apparatus membrane. The catalysed reaction is 3-O-[beta-D-GlcA-(1-&gt;3)-beta-D-Gal-(1-&gt;3)-beta-D-Gal-(1-&gt;4)-beta-D-2-O-P-Xyl]-L-seryl-[protein] + H2O = 3-O-(beta-D-GlcA-(1-&gt;3)-beta-D-Gal-(1-&gt;3)-beta-D-Gal-(1-&gt;4)-beta-D-Xyl)-L-seryl-[protein] + phosphate. Responsible for the 2-O-dephosphorylation of xylose in the glycosaminoglycan-protein linkage region of proteoglycans thereby regulating the amount of mature glycosaminoglycan (GAG) chains. Sulfated glycosaminoglycans (GAGs), including heparan sulfate and chondroitin sulfate, are synthesized on the so-called common GAG-protein linkage region (GlcUAbeta1-3Galbeta1-3Galbeta1-4Xylbeta1-O-Ser) of core proteins, which is formed by the stepwise addition of monosaccharide residues by the respective specific glycosyltransferases. This is 2-phosphoxylose phosphatase 1 from Danio rerio (Zebrafish).